The following is a 227-amino-acid chain: Ribonuclease 3 (227 aa).

In terms of domain architecture, RNase III spans F4 to N133. E46 contributes to the Mg(2+) binding site. D50 is an active-site residue. Positions 119 and 122 each coordinate Mg(2+). Residue E122 is part of the active site. The 69-residue stretch at D158–D226 folds into the DRBM domain.

The protein belongs to the ribonuclease III family. As to quaternary structure, homodimer. Mg(2+) serves as cofactor.

Its subcellular location is the cytoplasm. It catalyses the reaction Endonucleolytic cleavage to 5'-phosphomonoester.. In terms of biological role, digests double-stranded RNA. Involved in the processing of primary rRNA transcript to yield the immediate precursors to the large and small rRNAs (23S and 16S). Processes some mRNAs, and tRNAs when they are encoded in the rRNA operon. Processes pre-crRNA and tracrRNA of type II CRISPR loci if present in the organism. This Rickettsia akari (strain Hartford) protein is Ribonuclease 3.